Here is a 458-residue protein sequence, read N- to C-terminus: Na(+)/H(+) antiporter NhaA (458 aa).

The next 12 membrane-spanning stretches (helical) occupy residues 27 to 47, 78 to 98, 114 to 134, 143 to 163, 172 to 192, 201 to 221, 222 to 242, 249 to 269, 316 to 336, 346 to 366, 388 to 408, and 421 to 441; these read FLHV…AALI, LHFW…GMEI, ILPI…YLSF, GWAV…ALLG, VILL…IAFF, GLAI…IGLA, SAWL…ITGV, VILG…PLTI, PWVA…VSFA, FLVV…GIIT, ILLI…VSML, and IGVL…GLIY.

It belongs to the NhaA Na(+)/H(+) (TC 2.A.33) antiporter family.

It localises to the cell inner membrane. It carries out the reaction Na(+)(in) + 2 H(+)(out) = Na(+)(out) + 2 H(+)(in). Its function is as follows. Na(+)/H(+) antiporter that extrudes sodium in exchange for external protons. The protein is Na(+)/H(+) antiporter NhaA of Bartonella quintana (strain Toulouse) (Rochalimaea quintana).